The primary structure comprises 260 residues: Aliphatic sulfonates import ATP-binding protein SsuB 1 (260 aa).

Residues 29–243 (VRVDGLTRSF…DITDPRFAEL (215 aa)) form the ABC transporter domain. 61–68 (GRSGCGKS) lines the ATP pocket.

It belongs to the ABC transporter superfamily. Aliphatic sulfonates importer (TC 3.A.1.17.2) family. In terms of assembly, the complex is composed of two ATP-binding proteins (SsuB), two transmembrane proteins (SsuC) and a solute-binding protein (SsuA).

Its subcellular location is the cell membrane. The catalysed reaction is ATP + H2O + aliphatic sulfonate-[sulfonate-binding protein]Side 1 = ADP + phosphate + aliphatic sulfonateSide 2 + [sulfonate-binding protein]Side 1.. Functionally, part of the ABC transporter complex SsuABC involved in aliphatic sulfonates import. Responsible for energy coupling to the transport system. This chain is Aliphatic sulfonates import ATP-binding protein SsuB 1, found in Streptomyces avermitilis (strain ATCC 31267 / DSM 46492 / JCM 5070 / NBRC 14893 / NCIMB 12804 / NRRL 8165 / MA-4680).